Consider the following 344-residue polypeptide: tRNA N6-adenosine threonylcarbamoyltransferase (344 aa).

Residues His113 and His117 each coordinate Fe cation. Residues 135–139, Asp169, Gly182, Asp186, and Asn278 contribute to the substrate site; that span reads LVSGG. Asp306 lines the Fe cation pocket. Residues 325–344 are disordered; sequence ESPISVGTDPSLSVETPQVF. Polar residues predominate over residues 326–344; it reads SPISVGTDPSLSVETPQVF.

It belongs to the KAE1 / TsaD family. Fe(2+) serves as cofactor.

Its subcellular location is the cytoplasm. It catalyses the reaction L-threonylcarbamoyladenylate + adenosine(37) in tRNA = N(6)-L-threonylcarbamoyladenosine(37) in tRNA + AMP + H(+). Its function is as follows. Required for the formation of a threonylcarbamoyl group on adenosine at position 37 (t(6)A37) in tRNAs that read codons beginning with adenine. Is involved in the transfer of the threonylcarbamoyl moiety of threonylcarbamoyl-AMP (TC-AMP) to the N6 group of A37, together with TsaE and TsaB. TsaD likely plays a direct catalytic role in this reaction. This chain is tRNA N6-adenosine threonylcarbamoyltransferase, found in Corynebacterium glutamicum (strain ATCC 13032 / DSM 20300 / JCM 1318 / BCRC 11384 / CCUG 27702 / LMG 3730 / NBRC 12168 / NCIMB 10025 / NRRL B-2784 / 534).